The chain runs to 776 residues: Microtubule-associated protein tau (776 aa).

Residues 1 to 26 (MAEPRQEFDVMEDHAGTYGLGDRKDQ) are compositionally biased toward basic and acidic residues. Residues 1–591 (MAEPRQEFDV…PVPMPDLKNV (591 aa)) form a disordered region. Position 2 is an N-acetylalanine (A2). A phosphotyrosine mark is found at Y18 and Y29. Residue K44 forms a Glycyl lysine isopeptide (Lys-Gly) (interchain with G-Cter in ubiquitin) linkage. Residues S46 and S61 each carry the phosphoserine modification. Positions 61 to 71 (SETSDAKSTPT) are enriched in polar residues. 3 positions are modified to phosphothreonine: T69, T71, and T111. 2 stretches are compositionally biased toward basic and acidic residues: residues 179 to 189 (EGGRHAPELLK) and 207 to 216 (GGKERPGIKE). Acidic residues predominate over residues 217-228 (EVDEDRDVDESS). The segment covering 314 to 323 (EQAHSEEHLG) has biased composition (basic and acidic residues). Over residues 325–340 (AAFPGAPGEGPEAQGP) the composition is skewed to low complexity. 2 stretches are compositionally biased toward basic and acidic residues: residues 344–356 (EDTK…EPSE) and 381–393 (KSKD…DKKA). Positions 442–453 (VSSVTXRTGSSG) are enriched in low complexity. Residues 455 to 466 (KEMKLKGADGKT) show a composition bias toward basic and acidic residues. T470 is modified (phosphothreonine). R472 carries the post-translational modification Omega-N-methylarginine. K480 is modified (N6,N6-dimethyllysine; alternate). K480 carries the N6-acetyllysine; alternate modification. A phosphothreonine mark is found at T486, T492, and T498. Phosphoserine is present on residues S502, S526, and S530. Residues 517-528 (KSERGEPPKSGD) show a composition bias toward basic and acidic residues. A compositionally biased stretch (low complexity) spans 529-549 (RSGYSSPGSPGTPGSRSRTPS). Y532 is modified (phosphotyrosine). 3 positions are modified to phosphoserine: S533, S534, and S537. Residues T540 and T547 each carry the phosphothreonine modification. Position 549 is a phosphoserine (S549). T552 is subject to Phosphothreonine. Position 560 is an N6-acetyllysine (K560). Position 566 is a phosphothreonine (T566). Residues S570 and S572 each carry the phosphoserine modification. 4 Tau/MAP repeats span residues 579 to 609 (QTAP…GGGK), 610 to 640 (VQII…GGGS), 641 to 671 (VQIV…GGGQ), and 672 to 703 (VEVK…GGGN). A Glycyl lysine isopeptide (Lys-Gly) (interchain with G-Cter in ubiquitin) cross-link involves residue K589. K594 is modified (N6-acetyllysine; alternate). An N6-methyllysine; alternate modification is found at K594. Residue K594 forms a Glycyl lysine isopeptide (Lys-Gly) (interchain with G-Cter in ubiquitin); alternate linkage. At S597 the chain carries Phosphoserine. K602 is covalently cross-linked (Glycyl lysine isopeptide (Lys-Gly) (interchain with G-Cter in ubiquitin)). K616 carries the N6-acetyllysine; alternate modification. K616 participates in a covalent cross-link: Glycyl lysine isopeptide (Lys-Gly) (interchain with G-Cter in ubiquitin); alternate. Phosphoserine is present on residues S620 and S624. An N6-acetyllysine modification is found at K625. A Phosphoserine modification is found at S628. An N6-acetyllysine; alternate modification is found at K633. K633 is covalently cross-linked (Glycyl lysine isopeptide (Lys-Gly) (interchain with G-Cter in ubiquitin); alternate). S640 carries the post-translational modification Phosphoserine. N6,N6-dimethyllysine; alternate is present on K646. K646, K652, and K656 each carry N6-acetyllysine; alternate. Residues K646, K652, and K656 each participate in a glycyl lysine isopeptide (Lys-Gly) (interchain with G-Cter in ubiquitin); alternate cross-link. Position 659 is a phosphoserine (S659). Residues K666, K678, and K682 each carry the N6-acetyllysine; alternate modification. Residues K666, K678, and K682 each participate in a glycyl lysine isopeptide (Lys-Gly) (interchain with G-Cter in ubiquitin); alternate cross-link. R684 is modified (omega-N-methylarginine). The residue at position 687 (S687) is a Phosphoserine. A Glycyl lysine isopeptide (Lys-Gly) (interchain with G-Cter in ubiquitin) cross-link involves residue K688. S691 is modified (phosphoserine). K704 is subject to N6-acetyllysine; alternate. A Glycyl lysine isopeptide (Lys-Gly) (interchain with G-Cter in ubiquitin); alternate cross-link involves residue K704. K710 participates in a covalent cross-link: Glycyl lysine isopeptide (Lys-Gly) (interchain with G-Cter in ubiquitin). K720 is subject to N6-acetyllysine; alternate. A Glycyl lysine isopeptide (Lys-Gly) (interchain with G-Cter in ubiquitin); alternate cross-link involves residue K720. Phosphotyrosine is present on Y729. A phosphoserine mark is found at S731 and S735. The segment at 733 to 752 (VVSGDTSPRHLSNVSSTGSI) is disordered. A compositionally biased stretch (polar residues) spans 736–751 (GDTSPRHLSNVSSTGS). T738 bears the Phosphothreonine mark. Phosphoserine occurs at positions 739, 744, 751, and 757. Position 762 is a phosphothreonine (T762).

As to quaternary structure, interacts with MARK1, MARK2, MARK3 and MARK4. Interacts with SQSTM1 when polyubiquitinated. Interacts with PSMC2 through SQSTM1. Interacts with FKBP4. Binds to CSNK1D. Interacts with SGK1. Interacts with EPM2A; the interaction dephosphorylates MAPT at Ser-396. Interacts with PIN1. Interacts with LRRK2. Interacts with LRP1, leading to endocytosis; this interaction is reduced in the presence of LRPAP1/RAP. In terms of processing, polyubiquitinated. Requires functional TRAF6 and may provoke SQSTM1-dependent degradation by the proteasome. Phosphorylation at various serine and threonine residues in S-P or T-P motifs by proline-directed protein kinases (PDPK1, CDK1, CDK5, GSK3, MAPK) (a few sites per protein in interphase, more in mitosis), and at serine residues in K-X-G-S motifs by MAP/microtubule affinity-regulating kinase (MARK1, MARK2, MARK3 or MARK4), causing detachment from microtubules, and their disassembly. Phosphorylation at Ser-597 by BRSK1 and BRSK2 in neurons affects ability to bind microtubules and plays a role in neuron polarization. Phosphorylated by PHK. Dephosphorylation at several serine and threonine residues by the serine/threonine phosphatase PPP5C.

Its subcellular location is the cytoplasm. It localises to the cytosol. The protein resides in the cell membrane. It is found in the cytoskeleton. The protein localises to the cell projection. Its subcellular location is the axon. It localises to the dendrite. Promotes microtubule assembly and stability, and might be involved in the establishment and maintenance of neuronal polarity. The C-terminus binds axonal microtubules while the N-terminus binds neural plasma membrane components, suggesting that tau functions as a linker protein between both. Axonal polarity is predetermined by tau localization (in the neuronal cell) in the domain of the cell body defined by the centrosome. The short isoforms allow plasticity of the cytoskeleton whereas the longer isoforms may preferentially play a role in its stabilization. The chain is Microtubule-associated protein tau (MAPT) from Hylobates lar (Lar gibbon).